The following is a 1883-amino-acid chain: AF4/FMR2 family member lilli (1883 aa).

The segment covering 1-45 (MAQQQQQQHLQQQQQQHHQQQQLQQLQQQQQLPQYNNNLYNLNYN) has biased composition (low complexity). Disordered stretches follow at residues 1–88 (MAQQ…SEGD), 140–311 (INST…EKDI), 329–381 (SIAA…SCTT), 449–540 (MPTP…HHQH), 609–654 (LGGG…HLSR), 796–827 (SISSGSASGSSSSDSAAGEVVPLPGPGETLQI), 844–901 (MQQK…KKHA), 922–962 (TAAA…LAKG), 992–1018 (VAGSRKREHSSNSSSNGNTPTKKLHAA), 1039–1075 (TAAAGSSSDEDSTSSSCSSTKSSNSSSSGSDSEATAT), 1115–1145 (KNNRLYGAGSSSNSSSSETEEQQQQQQQHKQ), 1170–1238 (QHQQ…KSDK), 1358–1413 (YAAE…GART), 1450–1510 (EHGV…DQVS), 1543–1583 (ANGS…KATT), 1595–1641 (QTST…PPSD), and 1783–1803 (PSNSVGSQGSGSNTPPGRIVP). The segment covering 57–80 (REKYERQQGIQSDDRETSLFEAPR) has biased composition (basic and acidic residues). 4 stretches are compositionally biased toward low complexity: residues 140-154 (INSTTTTSSSASLLP), 161-178 (QQQQQQQQQQQQHYQQQQ), 223-253 (SASSSSSASNNNSSSATNNATAAAATSASTA), and 362-381 (PLNSPPAASGASSSSLSCTT). Residues 450-462 (PTPPKASPTPPTA) are compositionally biased toward pro residues. Thr458 carries the phosphothreonine modification. Over residues 466–479 (LKSEKNHSLEKQDS) the composition is skewed to basic and acidic residues. The span at 481–491 (LENDLELSESD) shows a compositional bias: acidic residues. Residues Ser488 and Ser490 each carry the phosphoserine modification. Residues 500-540 (SAGNSSNSSETDSSESGSEASSKGEAQQQQQQQQQLLHHQH) show a composition bias toward low complexity. The segment covering 609 to 625 (LGGGGGSGSTGGGGGSS) has biased composition (gly residues). Low complexity-rich tracts occupy residues 626–639 (SSGMGNMSSSSSSN) and 796–813 (SISSGSASGSSSSDSAAG). A compositionally biased stretch (basic residues) spans 867–877 (PRQKKPRKKKM). A phosphoserine mark is found at Ser887 and Ser888. Positions 930 to 942 (KKGRGRPRKQQQQ) form a DNA-binding region, a.T hook. A compositionally biased stretch (low complexity) spans 939-962 (QQQQLQQTQSGNLSSASAGSLAKG). Residues Ser953 and Ser955 each carry the phosphoserine modification. Composition is skewed to low complexity over residues 1124 to 1145 (SSSNSSSSETEEQQQQQQQHKQ), 1170 to 1186 (QHQQQQPLQPQQQQQQQ), 1200 to 1222 (SSSSDGSSSSSTDSSSTNSSSSS), 1362 to 1376 (QQQQQQQHLHTQQLH), and 1385 to 1399 (HYQQQHQPHQQKAQQ). Over residues 1450–1467 (EHGVKPEPELDAGYEAKY) the composition is skewed to basic and acidic residues. The residue at position 1546 (Ser1546) is a Phosphoserine. Position 1548 is a phosphothreonine (Thr1548). 2 stretches are compositionally biased toward low complexity: residues 1558–1583 (QQQQHQQQQQQQQHQPQHQQQLKATT) and 1595–1606 (QTSTTATQQPTT). Over residues 1614–1625 (TPPPVAPPPPPR) the composition is skewed to pro residues. Residues 1783–1794 (PSNSVGSQGSGS) show a composition bias toward low complexity.

This sequence belongs to the AF4 family.

The protein resides in the nucleus. Has a role in transcriptional regulation. Acts in parallel with the Ras/MAPK and the PI3K/PKB pathways in the control of cell identity and cellular growth. Essential for regulation of the cytoskeleton and cell growth but not for cell proliferation or growth rate. Required specifically for the microtubule-based basal transport of lipid droplets. Plays a partially redundant function downstream of Raf in cell fate specification in the developing eye. Pair-rule protein that regulates embryonic cellularization, gastrulation and segmentation. This chain is AF4/FMR2 family member lilli, found in Drosophila grimshawi (Hawaiian fruit fly).